The primary structure comprises 192 residues: MLKKTLLGLTAGALLLNASSALAANYKIDIPGQHAFIGFRIQHLGYSWLYGTFKDFDGSFTFDEQNPAENKVNVTIKIASLDTNHAERDKHLRSKDYFNTEKYPEAKFTSTEVKKEGEKYVVTGDLTLNGVTKPVILNAELMGEGKDPWGGYRAGFEASGKIKLKDFNFKADLGPKSQEADLLISIEGVREK.

The signal sequence occupies residues 1–23 (MLKKTLLGLTAGALLLNASSALA).

The protein belongs to the UPF0312 family. Type 1 subfamily.

Its subcellular location is the periplasm. In Photorhabdus laumondii subsp. laumondii (strain DSM 15139 / CIP 105565 / TT01) (Photorhabdus luminescens subsp. laumondii), this protein is UPF0312 protein plu2095.